Reading from the N-terminus, the 659-residue chain is Exoribonuclease 2 (659 aa).

In terms of domain architecture, RNB spans 189–531 (RKDLTALHFV…NHRLIKACIA (343 aa)). Residues 576–658 (KPEFQAEVQD…ETRSLIGNLV (83 aa)) form the S1 motif domain.

The protein belongs to the RNR ribonuclease family. RNase II subfamily.

It localises to the cytoplasm. It catalyses the reaction Exonucleolytic cleavage in the 3'- to 5'-direction to yield nucleoside 5'-phosphates.. Its function is as follows. Involved in mRNA degradation. Hydrolyzes single-stranded polyribonucleotides processively in the 3' to 5' direction. The sequence is that of Exoribonuclease 2 from Actinobacillus succinogenes (strain ATCC 55618 / DSM 22257 / CCUG 43843 / 130Z).